Consider the following 266-residue polypeptide: Norfluorocurarine synthase 2 (266 aa).

One can recognise an AB hydrolase-1 domain in the interval 11-121 (HFVLVHGAGH…VMPDSTHPPN (111 aa)). Catalysis depends on residues Ser-86, Asp-216, and His-244.

The protein belongs to the AB hydrolase superfamily. Homodimer.

The catalysed reaction is 17-dehydropreakuammicine + H2O = norfluorocurarine + methanol + CO2. It participates in alkaloid biosynthesis. Functionally, hydrolase involved in the biosynthesis of curare monoterpene indole alkaloids (MIAs), natural products such as diaboline, a pharmacologically active compound used to regulate blood pressure. Curare alkaloids act as animal glycine receptor antagonists. Catalyzes the conversion of dehydropreakuammicine to norfluorocurarine. The protein is Norfluorocurarine synthase 2 of Strychnos sp.